The primary structure comprises 263 residues: Probable ribosomal RNA small subunit methyltransferase A (263 aa).

Leucine 12, glycine 37, glutamate 58, aspartate 83, and asparagine 100 together coordinate S-adenosyl-L-methionine.

The protein belongs to the class I-like SAM-binding methyltransferase superfamily. rRNA adenine N(6)-methyltransferase family. RsmA subfamily.

It is found in the cytoplasm. Functionally, specifically dimethylates two adjacent adenosines in the loop of a conserved hairpin near the 3'-end of 16S rRNA in the 30S particle. May play a critical role in biogenesis of 30S subunits. The polypeptide is Probable ribosomal RNA small subunit methyltransferase A (Methanococcus maripaludis (strain C5 / ATCC BAA-1333)).